The following is a 340-amino-acid chain: DNA-directed RNA polymerase subunit alpha (340 aa).

The tract at residues Met-1–Asp-233 is alpha N-terminal domain (alpha-NTD). Positions Asp-246 to Glu-340 are alpha C-terminal domain (alpha-CTD).

The protein belongs to the RNA polymerase alpha chain family. Homodimer. The RNAP catalytic core consists of 2 alpha, 1 beta, 1 beta' and 1 omega subunit. When a sigma factor is associated with the core the holoenzyme is formed, which can initiate transcription.

The enzyme catalyses RNA(n) + a ribonucleoside 5'-triphosphate = RNA(n+1) + diphosphate. Functionally, DNA-dependent RNA polymerase catalyzes the transcription of DNA into RNA using the four ribonucleoside triphosphates as substrates. The protein is DNA-directed RNA polymerase subunit alpha of Pelobacter propionicus (strain DSM 2379 / NBRC 103807 / OttBd1).